Here is a 391-residue protein sequence, read N- to C-terminus: Homocysteine-responsive endoplasmic reticulum-resident ubiquitin-like domain member 1 protein (391 aa).

M1 carries the N-acetylmethionine modification. Residues 1-263 (MESETEPEPV…VEEDDEINRD (263 aa)) are Cytoplasmic-facing. The Ubiquitin-like domain occupies 10–72 (VTLLVKSPNQ…LLDHQCLRDL (63 aa)). The tract at residues 100 to 126 (KVAESTEEPAGSNRGQYPEDSSSDGLR) is disordered. Residues 112 to 124 (NRGQYPEDSSSDG) are compositionally biased toward polar residues. Positions 115–200 (QYPEDSSSDG…ASGAFVPPPS (86 aa)) are interaction with UBQLN1. S135 is modified (phosphoserine). Positions 170 to 190 (LSWFQQIYARQYYMQYLAATA) are interaction with SYVN1. Residues 264-284 (WLDWTYSAATFSVFLSILYFY) form a helical membrane-spanning segment. The Lumenal segment spans residues 285–289 (SSLSR). The chain crosses the membrane as a helical span at residues 290-310 (FLMVMGATVVMYLHHVGWFPF). At 311–391 (RPRPVQNFPN…LPEGPPAIAN (81 aa)) the chain is on the cytoplasmic side. A disordered region spans residues 318–359 (FPNDGPPPDVVNQDPNNNLQEGTDPETEDPNHLPPDRDVLDG). A compositionally biased stretch (basic and acidic residues) spans 346-357 (DPNHLPPDRDVL).

In terms of assembly, interacts with PSEN1 and PSEN2. Interacts with UBXN6. Interacts with UBQLN1, UBQLN2 and UBQLN4. Component of the HRD1 complex, which comprises at least SYNV1/HRD1, FAM8A1, HERPUD1/HERP, OS9, SEL1L and UBE2J1. FAM8A1 binding to SYNV1 may promote recruitment of HERPUD1 to the HRD1 complex. In terms of tissue distribution, widely expressed; in the brain, expression seems to be restricted to neurons and vascular smooth muscle cells. Present in activated microglia in senile plaques in the brain of patients with Alzheimer disease.

The protein resides in the endoplasmic reticulum membrane. In terms of biological role, component of the endoplasmic reticulum quality control (ERQC) system also called ER-associated degradation (ERAD) involved in ubiquitin-dependent degradation of misfolded endoplasmic reticulum proteins. Could enhance presenilin-mediated amyloid-beta protein 40 generation. Binds to ubiquilins and this interaction is required for efficient degradation of CD3D via the ERAD pathway. The chain is Homocysteine-responsive endoplasmic reticulum-resident ubiquitin-like domain member 1 protein (HERPUD1) from Homo sapiens (Human).